Consider the following 520-residue polypeptide: RNA polymerase sigma factor sigA (520 aa).

The transit peptide at 1–66 (MTATPAVIGL…APATPKLTAV (66 aa)) directs the protein to the chloroplast. A compositionally biased stretch (gly residues) spans 37–49 (GGGGGGGGGGGGD). Disordered regions lie at residues 37–57 (GGGG…APPA), 87–117 (HHSS…AHAH), and 171–190 (SVSA…TKNG). Over residues 96 to 108 (APPPPPPPPPTPS) the composition is skewed to pro residues. The span at 175–187 (RQRRMSGRRRGRT) shows a compositional bias: basic residues. Residues 305-318 (DLIQGGLIGLLRGI) carry the Polymerase core binding motif. A DNA-binding region (H-T-H motif) is located at residues 479 to 498 (WEDISRQFGLSRERVRQVGL).

The protein belongs to the sigma-70 factor family. In terms of tissue distribution, expressed in shoots. Expressed in the tips of fully elongated leaves. Expressed in leaf blades.

It localises to the plastid. Its subcellular location is the chloroplast. In terms of biological role, sigma factors are initiation factors that promote the attachment of plastid-encoded RNA polymerase (PEP) to specific initiation sites and are then released. Controls the transcription of the psaA and psaB genes in chloroplast, and thus maintains the abundance of the core protein complex PsaA-PsaB of photosystem I (PSI) in the thylakoid membrane. Maintains PSI activity, sufficient rate of electron transfer from PSII to PSI, and photochemical efficiency. This is RNA polymerase sigma factor sigA from Oryza sativa subsp. japonica (Rice).